The following is a 1484-amino-acid chain: Glutamate receptor ionotropic, NMDA 2B (1484 aa).

The N-terminal stretch at 1 to 26 is a signal peptide; the sequence is MKPRAECCSPKFWLVLAVLAVSGSRA. At 27-555 the chain is on the extracellular side; that stretch reads RSQKSPPSIG…SPSAFLEPFS (529 aa). Asn74 is a glycosylation site (N-linked (GlcNAc...) asparagine). A disulfide bridge connects residues Cys86 and Cys321. 2 residues coordinate Zn(2+): His127 and Glu284. N-linked (GlcNAc...) asparagine glycosylation is found at Asn341, Asn348, Asn444, and Asn491. Intrachain disulfides connect Cys429/Cys456 and Cys436/Cys457. L-glutamate contacts are provided by Thr514 and Arg519. Asn542 is a glycosylation site (N-linked (GlcNAc...) asparagine). A helical transmembrane segment spans residues 556 to 576; that stretch reads ADVWVMMFVMLLIVSAVAVFV. Topologically, residues 577-601 are cytoplasmic; it reads FEYFSPVGYNRCLADGREPGGPSFT. The segment at residues 602–613 is an intramembrane region (discontinuously helical); sequence IGKAIWLLWGLV. Positions 604–623 are pore-forming; that stretch reads KAIWLLWGLVFNNSVPVQNP. The Cytoplasmic segment spans residues 614 to 627; the sequence is FNNSVPVQNPKGTT. A helical transmembrane segment spans residues 628–647; sequence SKIMVSVWAFFAVIFLASYT. The Extracellular portion of the chain corresponds to 648–819; sequence ANLAAFMIQE…SSQLDIDNMA (172 aa). The N-linked (GlcNAc...) asparagine glycan is linked to Asn688. Residues 690-691 and Asp732 each bind L-glutamate; that span reads ST. A helical membrane pass occupies residues 820–835; the sequence is GVFYMLGAAMALSLIT. The Cytoplasmic portion of the chain corresponds to 836 to 1484; that stretch reads FICEHLFYWQ…EKLSSIESDV (649 aa). A phosphoserine mark is found at Ser882, Ser886, Ser917, and Ser920. Residues Tyr962 and Tyr1039 each carry the phosphotyrosine modification. A phosphoserine mark is found at Ser1058, Ser1061, and Ser1064. The tract at residues 1074 to 1097 is disordered; sequence EGNAAKRRKQQYKDSLKKRPASAK. Phosphotyrosine is present on residues Tyr1109 and Tyr1133. Ser1143 is modified (phosphoserine). Phosphotyrosine is present on Tyr1155. The segment at 1161–1194 is disordered; sequence DFKRDSVSGGGPCTNRSHIKHGTGDKHGVVSGVP. Phosphoserine occurs at positions 1255 and 1259. The interval 1271–1301 is disordered; the sequence is AVTSNASTTKYPQSPTNSKAQKKNRNKLRRQ. Positions 1272 to 1289 are enriched in polar residues; the sequence is VTSNASTTKYPQSPTNSK. Positions 1290–1301 are enriched in basic residues; the sequence is AQKKNRNKLRRQ. Residues 1292–1304 are interaction with DAPK1; sequence KKNRNKLRRQHSY. Ser1303 carries the post-translational modification Phosphoserine; by DAPK1. Phosphotyrosine is present on Tyr1474. Residues 1482–1484 carry the PDZ-binding motif; the sequence is SDV.

It belongs to the glutamate-gated ion channel (TC 1.A.10.1) family. NR2B/GRIN2B subfamily. As to quaternary structure, heterotetramer. Forms heterotetrameric channels composed of two GluN1/zeta subunits (GRIN1), and two identical GluN2/epsilon subunits (GRIN2A, GRIN2B, GRIN2C or GRIN2D) or GluN3 subunits (GRIN3A or GRIN3B) (in vitro). Can also form heterotetrameric channels that contain at least two GluN1 subunits and at least two different GluN2 subunits (or a combination of one GluN2 and one GluN3 subunits) (in vitro). In vivo, the subunit composition may depend on the expression levels of the different subunits. Found in a complex with GRIN1 and GRIN3B. Found in a complex with GRIN1, GRIN3A and PPP2CB. Interacts with PDZ domains of PATJ, DLG3 and DLG4. Interacts with HIP1 and NETO1. Interacts with MAGI3. Interacts with DAPK1. Found in a complex with GRIN1 and PRR7. Interacts with PRR7. Interacts with CAMK2A. Interacts with ARC; preventing ARC oligomerization. Interacts with TMEM25. Interacts (via the extreme C-terminus) with FRMPD2 (via the second PDZ domain); the interaction is direct and is likely to promote NMDAR-mediated neural signal transmission. Interacts with FAM81A; the interaction facilitates condensate formation via liquid-liquid phase separation. Phosphorylated on tyrosine residues. Phosphorylation at Ser-1303 by DAPK1 enhances synaptic NMDA receptor channel activity. Primarily found in the fronto-parieto-temporal cortex and hippocampus pyramidal cells, lower expression in the basal ganglia.

It is found in the cell membrane. The protein resides in the postsynaptic cell membrane. The protein localises to the cell projection. Its subcellular location is the dendrite. It localises to the late endosome. It is found in the lysosome. The protein resides in the cytoplasm. The protein localises to the cytoskeleton. It catalyses the reaction Ca(2+)(in) = Ca(2+)(out). The enzyme catalyses Na(+)(in) = Na(+)(out). It carries out the reaction K(+)(in) = K(+)(out). Functionally, component of N-methyl-D-aspartate (NMDA) receptors (NMDARs) that function as heterotetrameric, ligand-gated cation channels with high calcium permeability and voltage-dependent block by Mg(2+). Participates in synaptic plasticity for learning and memory formation by contributing to the long-term depression (LTD) of hippocampus membrane currents. Channel activation requires binding of the neurotransmitter L-glutamate to the GluN2 subunit, glycine or D-serine binding to the GluN1 subunit, plus membrane depolarization to eliminate channel inhibition by Mg(2+). NMDARs mediate simultaneously the potasium efflux and the influx of calcium and sodium. Each GluN2 subunit confers differential attributes to channel properties, including activation, deactivation and desensitization kinetics, pH sensitivity, Ca2(+) permeability, and binding to allosteric modulators. In concert with DAPK1 at extrasynaptic sites, acts as a central mediator for stroke damage. Its phosphorylation at Ser-1303 by DAPK1 enhances synaptic NMDA receptor channel activity inducing injurious Ca2+ influx through them, resulting in an irreversible neuronal death. This chain is Glutamate receptor ionotropic, NMDA 2B, found in Homo sapiens (Human).